The chain runs to 75 residues: Conotoxin Vt15.1 (75 aa).

The first 19 residues, 1-19, serve as a signal peptide directing secretion; the sequence is MMPVILPLLLSLAIRGGDG. A propeptide spanning residues 20-43 is cleaved from the precursor; it reads QAIQGDRDLIAKLFKRYQEHGLSV. Trp-73 carries the tryptophan amide modification.

It belongs to the conotoxin V superfamily. In terms of processing, contains 4 disulfide bonds. In terms of tissue distribution, expressed by the venom duct.

It is found in the secreted. The polypeptide is Conotoxin Vt15.1 (Conus planorbis (Planorbis cone)).